The primary structure comprises 44 residues: Large ribosomal subunit protein bL34 (44 aa).

Residues 21-44 (RMDTSGGRRILSARRRKGRKTISA) form a disordered region. The segment covering 31 to 44 (LSARRRKGRKTISA) has biased composition (basic residues).

Belongs to the bacterial ribosomal protein bL34 family.

The sequence is that of Large ribosomal subunit protein bL34 from Endomicrobium trichonymphae.